Reading from the N-terminus, the 220-residue chain is Probable chemoreceptor glutamine deamidase CheD 2 (220 aa).

Belongs to the CheD family.

The enzyme catalyses L-glutaminyl-[protein] + H2O = L-glutamyl-[protein] + NH4(+). Probably deamidates glutamine residues to glutamate on methyl-accepting chemotaxis receptors (MCPs), playing an important role in chemotaxis. The protein is Probable chemoreceptor glutamine deamidase CheD 2 of Methanosarcina acetivorans (strain ATCC 35395 / DSM 2834 / JCM 12185 / C2A).